A 598-amino-acid chain; its full sequence is Elongation factor 4 (598 aa).

One can recognise a tr-type G domain in the interval 2 to 183 (KHIRNFCIIA…AIIEKIPHPK (182 aa)). Residues 14 to 19 (DHGKST) and 130 to 133 (NKVD) each bind GTP.

Belongs to the TRAFAC class translation factor GTPase superfamily. Classic translation factor GTPase family. LepA subfamily.

Its subcellular location is the cell inner membrane. It catalyses the reaction GTP + H2O = GDP + phosphate + H(+). Its function is as follows. Required for accurate and efficient protein synthesis under certain stress conditions. May act as a fidelity factor of the translation reaction, by catalyzing a one-codon backward translocation of tRNAs on improperly translocated ribosomes. Back-translocation proceeds from a post-translocation (POST) complex to a pre-translocation (PRE) complex, thus giving elongation factor G a second chance to translocate the tRNAs correctly. Binds to ribosomes in a GTP-dependent manner. This Flavobacterium psychrophilum (strain ATCC 49511 / DSM 21280 / CIP 103535 / JIP02/86) protein is Elongation factor 4.